Consider the following 86-residue polypeptide: Gas vesicle protein M (86 aa).

Belongs to the gas vesicle GvpA family. In terms of assembly, gvpF to GvpM interact with each other in vitro, and may form multi-subunit complex(es). Might interact with GvpA.

Its subcellular location is the gas vesicle. Proteins GvpF to GvpM might be involved in nucleating gas vesicle formation. A minor component of the gas vesicle. Gas vesicles are small, hollow, gas filled protein structures found in some microorganisms. They allow positioning of halobacteria at the optimal depth for growth in the poorly aerated, shallow brine pools of their habitat. Its function is as follows. Expression of a 9.5 kb mc-vac DNA fragment containing 2 divergently transcribed regions (gvpD-gvpE-gvpF-gvpG-gvpH-gvpI-gvpJ-gvpK-gvpL-gvpM and gvpA-gvpC-gvpN-gvpO) allows H.volcanii to produce gas vesicles. The sequence is that of Gas vesicle protein M from Haloferax mediterranei (strain ATCC 33500 / DSM 1411 / JCM 8866 / NBRC 14739 / NCIMB 2177 / R-4) (Halobacterium mediterranei).